The chain runs to 427 residues: 3-phosphoshikimate 1-carboxyvinyltransferase (427 aa).

The 3-phosphoshikimate site is built by K20, S21, and R25. K20 provides a ligand contact to phosphoenolpyruvate. Residues G90 and R118 each coordinate phosphoenolpyruvate. 6 residues coordinate 3-phosphoshikimate: S163, S164, Q165, S191, D309, and K336. Position 165 (Q165) interacts with phosphoenolpyruvate. D309 functions as the Proton acceptor in the catalytic mechanism. 2 residues coordinate phosphoenolpyruvate: R340 and R381.

It belongs to the EPSP synthase family. As to quaternary structure, monomer.

The protein resides in the cytoplasm. The catalysed reaction is 3-phosphoshikimate + phosphoenolpyruvate = 5-O-(1-carboxyvinyl)-3-phosphoshikimate + phosphate. It participates in metabolic intermediate biosynthesis; chorismate biosynthesis. Its function is as follows. Catalyzes the transfer of the enolpyruvyl moiety of phosphoenolpyruvate (PEP) to the 5-hydroxyl of shikimate-3-phosphate (S3P) to produce enolpyruvyl shikimate-3-phosphate and inorganic phosphate. The chain is 3-phosphoshikimate 1-carboxyvinyltransferase from Methanococcoides burtonii (strain DSM 6242 / NBRC 107633 / OCM 468 / ACE-M).